The primary structure comprises 210 residues: Outer-membrane lipoprotein LolB (210 aa).

The N-terminal stretch at 1-26 (MSKLKIDTKRRFSLLIALVLIISLSS) is a signal peptide. Cysteine 27 carries N-palmitoyl cysteine lipidation. The S-diacylglycerol cysteine moiety is linked to residue cysteine 27.

Belongs to the LolB family. As to quaternary structure, monomer.

The protein resides in the cell outer membrane. Plays a critical role in the incorporation of lipoproteins in the outer membrane after they are released by the LolA protein. This chain is Outer-membrane lipoprotein LolB, found in Francisella tularensis subsp. holarctica (strain FTNF002-00 / FTA).